Reading from the N-terminus, the 59-residue chain is Antitoxin RelB4 (59 aa).

The interval 38–59 (VGEWLKTLGTPHQTPPPYSWRK) is disordered. The segment covering 50–59 (QTPPPYSWRK) has biased composition (pro residues).

Its function is as follows. Antitoxin component of a type II toxin-antitoxin (TA) system. Neutralizes the effect of cognate toxin RelE4, but no other RelE or ParE toxin. This is Antitoxin RelB4 (relB4) from Caulobacter vibrioides (strain ATCC 19089 / CIP 103742 / CB 15) (Caulobacter crescentus).